A 471-amino-acid polypeptide reads, in one-letter code: Arginine biosynthesis bifunctional protein ArgJ, mitochondrial (471 aa).

Positions 201, 230, 241, 328, 466, and 471 each coordinate substrate. Catalysis depends on threonine 241, which acts as the Nucleophile.

Belongs to the ArgJ family. Heterodimer of an alpha and a beta chain. Post-translationally, the alpha and beta chains are autoproteolytically processed from a single precursor protein within the mitochondrion.

It localises to the mitochondrion matrix. The catalysed reaction is N(2)-acetyl-L-ornithine + L-glutamate = N-acetyl-L-glutamate + L-ornithine. The enzyme catalyses L-glutamate + acetyl-CoA = N-acetyl-L-glutamate + CoA + H(+). The protein operates within amino-acid biosynthesis; L-arginine biosynthesis; L-ornithine and N-acetyl-L-glutamate from L-glutamate and N(2)-acetyl-L-ornithine (cyclic): step 1/1. It functions in the pathway amino-acid biosynthesis; L-arginine biosynthesis; N(2)-acetyl-L-ornithine from L-glutamate: step 1/4. Functionally, catalyzes two activities which are involved in the cyclic version of arginine biosynthesis: the synthesis of acetylglutamate from glutamate and acetyl-CoA, and of ornithine by transacetylation between acetylornithine and glutamate. This is Arginine biosynthesis bifunctional protein ArgJ, mitochondrial from Ajellomyces capsulatus (strain NAm1 / WU24) (Darling's disease fungus).